The following is a 222-amino-acid chain: UPF0488 protein C8orf33 homolog (222 aa).

Positions 1–16 (MAEPGRPAREAPAASS) are enriched in low complexity. Disordered regions lie at residues 1–103 (MAEP…AEQL), 119–146 (KTQR…TPLP), and 186–210 (VSEA…KTTP). N-acetylalanine is present on Ala2. The segment covering 17-28 (RKTHRAPRRPRP) has biased composition (basic residues). At Arg27 the chain carries Omega-N-methylarginine. A compositionally biased stretch (low complexity) spans 29 to 39 (SRSASGASEPP). Ser75 carries the post-translational modification Phosphoserine. A compositionally biased stretch (low complexity) spans 93–103 (PPSAEAQAEQL).

Belongs to the UPF0488 family.

The protein is UPF0488 protein C8orf33 homolog of Mus musculus (Mouse).